The sequence spans 488 residues: Cobyric acid synthase (488 aa).

Residues 250–438 (DITIAIIRLP…LHGIFDNGSW (189 aa)) enclose the GATase cobBQ-type domain. The active-site Nucleophile is the cysteine 331. Residue histidine 430 is part of the active site.

It belongs to the CobB/CobQ family. CobQ subfamily.

Its pathway is cofactor biosynthesis; adenosylcobalamin biosynthesis. Its function is as follows. Catalyzes amidations at positions B, D, E, and G on adenosylcobyrinic A,C-diamide. NH(2) groups are provided by glutamine, and one molecule of ATP is hydrogenolyzed for each amidation. This is Cobyric acid synthase from Trichodesmium erythraeum (strain IMS101).